The sequence spans 315 residues: Porphobilinogen deaminase (315 aa).

Cys234 bears the S-(dipyrrolylmethanemethyl)cysteine mark.

This sequence belongs to the HMBS family. In terms of assembly, monomer. It depends on dipyrromethane as a cofactor.

It carries out the reaction 4 porphobilinogen + H2O = hydroxymethylbilane + 4 NH4(+). It participates in porphyrin-containing compound metabolism; protoporphyrin-IX biosynthesis; coproporphyrinogen-III from 5-aminolevulinate: step 2/4. Its function is as follows. Tetrapolymerization of the monopyrrole PBG into the hydroxymethylbilane pre-uroporphyrinogen in several discrete steps. The protein is Porphobilinogen deaminase (hemC) of Mycobacterium leprae (strain TN).